The following is a 164-amino-acid chain: Probable ribosome biogenesis protein RLP24 (164 aa).

It belongs to the eukaryotic ribosomal protein eL24 family. Associated with nucleolar and cytoplasmic pre-60S particles. At the end of biogenesis it dissociates from cytoplasmic pre-60S particles and is likely to be exchanged for its ribosomal homolog, RPL24.

Its subcellular location is the cytoplasm. It is found in the nucleus. Its function is as follows. Involved in the biogenesis of the 60S ribosomal subunit. Ensures the docking of nog1 to pre-60S particles. Activates and recruits ATPase AFG2 to cytoplasmic pre-60S ribosomal particles. This Dictyostelium discoideum (Social amoeba) protein is Probable ribosome biogenesis protein RLP24 (rlp24).